Reading from the N-terminus, the 269-residue chain is Regulatory protein RecX (269 aa).

The protein belongs to the RecX family.

It is found in the cytoplasm. Its function is as follows. Modulates RecA activity. The polypeptide is Regulatory protein RecX (Listeria monocytogenes serotype 4b (strain CLIP80459)).